A 348-amino-acid polypeptide reads, in one-letter code: Ricin B-like lectin R40C1 (348 aa).

Positions 1–26 (MFGFGHHGHHGQDQPPQHHGGGGGGA) are disordered. A Ricin B-type lectin domain is found at 199–345 (TVRIFCKADE…CEGDNQRWKI (147 aa)).

Expressed in roots and shoots.

Lectin which binds carbohydrates in vitro. Interacts through its lectin domain with glycan structures containing specific motifs. The chain is Ricin B-like lectin R40C1 from Oryza sativa subsp. japonica (Rice).